Reading from the N-terminus, the 346-residue chain is DNA ligase (346 aa).

Residues 32–35, arginine 39, 55–57, glutamate 93, glutamate 142, and arginine 149 contribute to the ATP site; these read DCKY and RVS. Lysine 34 serves as the catalytic N6-AMP-lysine intermediate. Glutamate 223 is an a divalent metal cation binding site. 2 residues coordinate ATP: lysine 238 and lysine 244.

This sequence belongs to the ATP-dependent DNA ligase family. It depends on a divalent metal cation as a cofactor.

It catalyses the reaction ATP + (deoxyribonucleotide)n-3'-hydroxyl + 5'-phospho-(deoxyribonucleotide)m = (deoxyribonucleotide)n+m + AMP + diphosphate.. Functionally, DNA ligase, which is expressed in the early stage of lytic development, has been implicated in T7 DNA synthesis and genetic recombination. It may also play a role in T7 DNA repair. The polypeptide is DNA ligase (1.3) (Enterobacteria phage T3 (Bacteriophage T3)).